The sequence spans 467 residues: Glutamate--tRNA ligase (467 aa).

The 'HIGH' region signature appears at 9–19; that stretch reads PSPTGFLHIGG. Positions 241 to 245 match the 'KMSKS' region motif; it reads KLSKR. Lysine 244 is an ATP binding site.

It belongs to the class-I aminoacyl-tRNA synthetase family. Glutamate--tRNA ligase type 1 subfamily. Monomer.

It is found in the cytoplasm. It carries out the reaction tRNA(Glu) + L-glutamate + ATP = L-glutamyl-tRNA(Glu) + AMP + diphosphate. Functionally, catalyzes the attachment of glutamate to tRNA(Glu) in a two-step reaction: glutamate is first activated by ATP to form Glu-AMP and then transferred to the acceptor end of tRNA(Glu). The chain is Glutamate--tRNA ligase from Methylobacillus flagellatus (strain ATCC 51484 / DSM 6875 / VKM B-1610 / KT).